Consider the following 153-residue polypeptide: Transcriptional repressor NrdR (153 aa).

A zinc finger lies at 3–34 (CPYCGHPDTRVVDSRPSDEGMAIRRRRECPSC). In terms of domain architecture, ATP-cone spans 49-136 (LMVVKRDGRK…VYREFDSVER (88 aa)).

It belongs to the NrdR family. It depends on Zn(2+) as a cofactor.

In terms of biological role, negatively regulates transcription of bacterial ribonucleotide reductase nrd genes and operons by binding to NrdR-boxes. The chain is Transcriptional repressor NrdR from Thermus thermophilus (strain ATCC BAA-163 / DSM 7039 / HB27).